A 131-amino-acid polypeptide reads, in one-letter code: Norrin (131 aa).

A signal peptide spans 1–24; that stretch reads MRNHVLAASISMLSLLAIMGDTDS. 4 cysteine pairs are disulfide-bonded: cysteine 37-cysteine 94, cysteine 53-cysteine 108, cysteine 63-cysteine 124, and cysteine 67-cysteine 126. One can recognise a CTCK domain in the interval 37 to 130; the sequence is CMRHHYVDSI…ILSCHCEECS (94 aa).

In terms of assembly, homodimer; disulfide-linked. Component of a complex, at least composed of TSPAN12, FZD4, LRP5/6 and norrin (NDP). Binds FZD4 with high affinity. Interacts with LRP6 (via Beta-propellers 1 and 2). In terms of tissue distribution, expressed in the outer nuclear, inner nuclear and ganglion cell layers of the retina.

The protein resides in the secreted. Functionally, activates the canonical Wnt signaling pathway through FZD4 and LRP5 coreceptor. Plays a central role in retinal vascularization by acting as a ligand for FZD4 that signals via stabilizing beta-catenin (CTNNB1) and activating LEF/TCF-mediated transcriptional programs. Acts in concert with TSPAN12 to activate FZD4 independently of the Wnt-dependent activation of FZD4, suggesting the existence of a Wnt-independent signaling that also promote accumulation the beta-catenin (CTNNB1). May be involved in a pathway that regulates neural cell differentiation and proliferation. Possible role in neuroectodermal cell-cell interaction. This chain is Norrin (Ndp), found in Mus musculus (Mouse).